The primary structure comprises 459 residues: Argininosuccinate lyase (459 aa).

This sequence belongs to the lyase 1 family. Argininosuccinate lyase subfamily.

It is found in the cytoplasm. The enzyme catalyses 2-(N(omega)-L-arginino)succinate = fumarate + L-arginine. Its pathway is amino-acid biosynthesis; L-arginine biosynthesis; L-arginine from L-ornithine and carbamoyl phosphate: step 3/3. This Sulfurihydrogenibium sp. (strain YO3AOP1) protein is Argininosuccinate lyase.